Here is a 213-residue protein sequence, read N- to C-terminus: UPF0111 protein TM_0914 (213 aa).

The protein belongs to the UPF0111 family.

This Thermotoga maritima (strain ATCC 43589 / DSM 3109 / JCM 10099 / NBRC 100826 / MSB8) protein is UPF0111 protein TM_0914.